The following is a 310-amino-acid chain: Ribosomal RNA small subunit methyltransferase H (310 aa).

Residues 33 to 35, D52, F79, D98, and Q105 each bind S-adenosyl-L-methionine; that span reads GGH.

This sequence belongs to the methyltransferase superfamily. RsmH family.

The protein localises to the cytoplasm. It catalyses the reaction cytidine(1402) in 16S rRNA + S-adenosyl-L-methionine = N(4)-methylcytidine(1402) in 16S rRNA + S-adenosyl-L-homocysteine + H(+). Specifically methylates the N4 position of cytidine in position 1402 (C1402) of 16S rRNA. The protein is Ribosomal RNA small subunit methyltransferase H of Campylobacter jejuni subsp. jejuni serotype O:23/36 (strain 81-176).